The following is a 164-amino-acid chain: Peroxynitrite isomerase (164 aa).

The GXWXGXG signature appears at 21-27 (GRWGGRG). Residues Lys130 and His156 each coordinate heme b.

Belongs to the nitrobindin family. In terms of assembly, homodimer. Heme b is required as a cofactor.

It carries out the reaction peroxynitrite = nitrate. It participates in nitrogen metabolism. In terms of biological role, heme-binding protein able to scavenge peroxynitrite and to protect free L-tyrosine against peroxynitrite-mediated nitration, by acting as a peroxynitrite isomerase that converts peroxynitrite to nitrate. Therefore, this protein likely plays a role in peroxynitrite sensing and in the detoxification of reactive nitrogen and oxygen species (RNS and ROS, respectively). Is able to bind nitric oxide (NO) in vitro, but may act as a sensor of peroxynitrite levels in vivo. The sequence is that of Peroxynitrite isomerase from Nocardioides sp. (strain ATCC BAA-499 / JS614).